Here is a 210-residue protein sequence, read N- to C-terminus: Large ribosomal subunit protein uL3 (210 aa).

The tract at residues 125–151 is disordered; it reads HGFGGGPRTHGQSDRLRAPGSIGAGTD.

This sequence belongs to the universal ribosomal protein uL3 family. In terms of assembly, part of the 50S ribosomal subunit. Forms a cluster with proteins L14 and L19.

In terms of biological role, one of the primary rRNA binding proteins, it binds directly near the 3'-end of the 23S rRNA, where it nucleates assembly of the 50S subunit. This chain is Large ribosomal subunit protein uL3, found in Roseiflexus sp. (strain RS-1).